A 625-amino-acid polypeptide reads, in one-letter code: Inactive glucose-6-phosphate 1-dehydrogenase 4, chloroplastic (625 aa).

A chloroplast-targeting transit peptide spans 1 to 49 (MSLSSCLLPFSQSATAPSSSVCSCHLAASFSNFPVSSRDYSFSRSGSLV). Residues 160-167 (GATGELAR) and arginine 194 contribute to the NADP(+) site. Cysteines 212 and 220 form a disulfide. Residue lysine 297 participates in NADP(+) binding. Residues lysine 297, 327–331 (HMLGR), glutamate 365, and aspartate 382 each bind D-glucose 6-phosphate. Histidine 387 (proton acceptor) is an active-site residue. NADP(+) contacts are provided by arginine 471, arginine 480, arginine 513, and arginine 606.

Belongs to the glucose-6-phosphate dehydrogenase family. As to quaternary structure, forms homodimer. Interacts with G6PD1. In terms of tissue distribution, expressed in leaves, stems and buds.

The protein localises to the plastid. Its subcellular location is the chloroplast stroma. Functionally, seems to be a catalytically inactive enzyme. This Arabidopsis thaliana (Mouse-ear cress) protein is Inactive glucose-6-phosphate 1-dehydrogenase 4, chloroplastic.